A 239-amino-acid polypeptide reads, in one-letter code: 7-cyano-7-deazaguanine synthase (239 aa).

Residue 13–23 (LSGGQDSATCL) participates in ATP binding. The Zn(2+) site is built by C199, C214, C217, and C220.

The protein belongs to the QueC family. Zn(2+) serves as cofactor.

The catalysed reaction is 7-carboxy-7-deazaguanine + NH4(+) + ATP = 7-cyano-7-deazaguanine + ADP + phosphate + H2O + H(+). Its pathway is purine metabolism; 7-cyano-7-deazaguanine biosynthesis. Its function is as follows. Catalyzes the ATP-dependent conversion of 7-carboxy-7-deazaguanine (CDG) to 7-cyano-7-deazaguanine (preQ(0)). This Acidovorax ebreus (strain TPSY) (Diaphorobacter sp. (strain TPSY)) protein is 7-cyano-7-deazaguanine synthase.